Consider the following 150-residue polypeptide: Calmodulin (150 aa).

4 consecutive EF-hand domains span residues 9–44 (EQIA…LGQS), 45–80 (PTAA…KMKD), 82–117 (DNEE…LGER), and 118–150 (LSQE…ISSK). Positions 22, 24, 26, 28, 33, 58, 60, 62, 64, 69, 95, 97, 99, 101, 106, 131, 133, 135, and 142 each coordinate Ca(2+).

The protein belongs to the calmodulin family. Interacts with rng2.

It localises to the cytoplasm. It is found in the cytoskeleton. The protein resides in the microtubule organizing center. The protein localises to the spindle pole body. Functionally, calmodulin mediates the control of a large number of enzymes, ion channels and other proteins by Ca(2+). Among the enzymes to be stimulated by the calmodulin-Ca(2+) complex are a number of protein kinases and phosphatases. This chain is Calmodulin (cam1), found in Schizosaccharomyces pombe (strain 972 / ATCC 24843) (Fission yeast).